The following is a 485-amino-acid chain: Two-component response regulator ORR31 (485 aa).

Residues 13–138 enclose the Response regulatory domain; the sequence is RVMPVDGDTK…TMAQLWRVVA (126 aa). D66 is subject to 4-aspartylphosphate. Residues 195-204 show a composition bias toward polar residues; it reads LTINVDSGSS. The tract at residues 195 to 236 is disordered; it reads LTINVDSGSSDGADANPRQKLEHKKDAKGPLGQHVASHLQPQ. Residues 211-222 show a composition bias toward basic and acidic residues; sequence PRQKLEHKKDAK.

This sequence belongs to the ARR family. Type-B subfamily. Two-component system major event consists of a His-to-Asp phosphorelay between a sensor histidine kinase (HK) and a response regulator (RR). In plants, the His-to-Asp phosphorelay involves an additional intermediate named Histidine-containing phosphotransfer protein (HPt). This multistep phosphorelay consists of a His-Asp-His-Asp sequential transfer of a phosphate group between first a His and an Asp of the HK protein, followed by the transfer to a conserved His of the HPt protein and finally the transfer to an Asp in the receiver domain of the RR protein.

Functionally, functions as a response regulator involved in His-to-Asp phosphorelay signal transduction system. Phosphorylation of the Asp residue in the receiver domain activates the ability of the protein to promote the transcription of target genes. May directly activate some type-A response regulators in response to cytokinins. In Oryza sativa subsp. japonica (Rice), this protein is Two-component response regulator ORR31.